The sequence spans 207 residues: FMN-dependent NADH:quinone oxidoreductase 2 (207 aa).

Residues serine 9, 15–17, and 97–100 each bind FMN; these read SAS and MWNF.

This sequence belongs to the azoreductase type 1 family. As to quaternary structure, homodimer. FMN serves as cofactor.

The catalysed reaction is 2 a quinone + NADH + H(+) = 2 a 1,4-benzosemiquinone + NAD(+). It catalyses the reaction N,N-dimethyl-1,4-phenylenediamine + anthranilate + 2 NAD(+) = 2-(4-dimethylaminophenyl)diazenylbenzoate + 2 NADH + 2 H(+). Its function is as follows. Quinone reductase that provides resistance to thiol-specific stress caused by electrophilic quinones. Also exhibits azoreductase activity. Catalyzes the reductive cleavage of the azo bond in aromatic azo compounds to the corresponding amines. The polypeptide is FMN-dependent NADH:quinone oxidoreductase 2 (Burkholderia lata (strain ATCC 17760 / DSM 23089 / LMG 22485 / NCIMB 9086 / R18194 / 383)).